The chain runs to 70 residues: uncharacterized protein (70 aa).

This is an uncharacterized protein from Treponema pallidum (strain Nichols).